The following is a 126-amino-acid chain: Large ribosomal subunit protein bL20 (126 aa).

It belongs to the bacterial ribosomal protein bL20 family.

Functionally, binds directly to 23S ribosomal RNA and is necessary for the in vitro assembly process of the 50S ribosomal subunit. It is not involved in the protein synthesizing functions of that subunit. This Frankia casuarinae (strain DSM 45818 / CECT 9043 / HFP020203 / CcI3) protein is Large ribosomal subunit protein bL20.